Reading from the N-terminus, the 327-residue chain is Small ribosomal subunit protein RACK1 (327 aa).

7 WD repeats span residues 13 to 44, 61 to 91, 103 to 133, 148 to 180, 192 to 222, 233 to 262, and 293 to 323; these read AHTDMVTAIATPIDNSDTIVSASRDKSIIVWK, GHSHFVEDVVLSSDGQFALSGSWDGELRLWD, GHTKDVLSVAFSLDNRQIVSASRDRTIKLWN, GHRDWVSCVRFSPNTLQPTIVSASCDKTVKVWN, GHTGYVSTVAVSPDGSLCASGGKDGVVLLWD, EANSVIHALCFTPNRYWLCAATEQGIKIWD, and RKVIYCTSLNWSADGSTLFSGYTDGVIRVWG.

The protein belongs to the WD repeat G protein beta family. Ribosomal protein RACK1 subfamily.

The protein is Small ribosomal subunit protein RACK1 (GB1) of Brassica napus (Rape).